A 927-amino-acid chain; its full sequence is Nuclear factor of activated T-cells, cytoplasmic 2 (927 aa).

A disordered region spans residues 1–29 (MDVPEPQPDPDGGDGPGHEPGGSPQDELD). Residues serine 23, serine 53, serine 54, serine 56, serine 99, serine 107, and serine 110 each carry the phosphoserine modification. Residues 111–116 (PRIEIT) form a calcineurin-binding region. Positions 119 to 201 (HELMQAGGAL…CVSPNNAGPD (83 aa)) are transactivation domain A (TAD-A). Serine 136, serine 150, serine 170, serine 173, serine 174, serine 176, serine 177, serine 179, and serine 182 each carry phosphoserine. Positions 163–177 (YREPLCLSPASSGSS) are required for cytoplasmic retention of the phosphorylated form. 2 consecutive repeat copies span residues 186 to 202 (SPYT…GPDD) and 215 to 231 (SPRT…LAED). The interval 186-292 (SPYTSPCVSP…PHVALQDDSI (107 aa)) is 3 X approximate SP repeats. 2 disordered regions span residues 203 to 299 (LCPQ…YPPT) and 322 to 341 (SKIW…PSKA). Serine 215, serine 219, serine 223, serine 238, and serine 245 each carry phosphoserine. Residues 216-226 (PRTSPIMSPRT) show a composition bias toward polar residues. A Nuclear localization signal motif is present at residues 253-255 (KRR). 7 positions are modified to phosphoserine: serine 257, serine 270, serine 276, serine 278, serine 282, serine 328, and serine 365. Positions 267-277 (PAASPQRSRSP) are enriched in low complexity. Residues 274–290 (SRSPSPQPSPHVALQDD) form a 3; approximate repeat. The RHD domain occupies 394-576 (ASLPPLEWPL…NPIECSQRSA (183 aa)). The DNA-binding element occupies 423 to 430 (RAHYETEG). Residues serine 757, serine 759, and serine 761 each carry the phosphoserine modification. 2 disordered regions span residues 790 to 812 (AGSQ…QQAS) and 841 to 903 (FGPS…QNLD). The segment covering 798–812 (GSTLPHTSSASQQAS) has biased composition (polar residues). A Phosphoserine modification is found at serine 860.

As to quaternary structure, member of the multicomponent NFATC transcription complex that consists of at least two components, a pre-existing cytoplasmic component NFATC2 and an inducible nuclear component NFATC1. Other members such as NFATC4, NFATC3 or members of the activating protein-1 family, MAF, GATA4 and Cbp/p300 can also bind the complex. The phosphorylated form specifically interacts with XPO1; which mediates nuclear export. NFATC proteins bind to DNA as monomers. Interacts with NFATC2IP. Interacts with FOXP3. Interacts with TBX21 ('Thr-302' phosphorylated form). Interacts with KAT2A. Interacts with HOMER2 and HOMER3; this interaction competes with calcineurin/PPP3CA-binding and hence prevents NFATC2 dephosphorylation and activation. Interacts with protein phosphatase PPP3CA/calcineurin A. Interacts with AKAP5 (via leucine zipper domain); this is required for NFATC2/NFAT1 recruitment to CRAC channels. In terms of processing, in resting cells, phosphorylated by NFATC-kinase on at least 18 sites in the 99-365 region. Upon cell stimulation, all these sites except Ser-245 are dephosphorylated by calcineurin. Dephosphorylation induces a conformational change that simultaneously exposes an NLS and masks an NES, which results in nuclear localization. Simultaneously, one site among Ser-53; Ser-54 and Ser-56 is phosphorylated; which is required for full transcriptional activity. Ubiquitinated in endothelial cells by RNF213 downstream of the non-canonical Wnt signaling pathway, leading to its degradation by the proteasome. In terms of tissue distribution, expressed in spleen, heart, testis, brain, placenta, muscle and pancreas. Expressed in the thymus. Expressed in the lung. Expressed in cartilage.

It is found in the cytoplasm. The protein resides in the nucleus. Its function is as follows. Plays a role in the inducible expression of cytokine genes in T cells, especially in the induction of the IL-2, IL-3, IL-4, TNF-alpha or GM-CSF. Promotes invasive migration through the activation of GPC6 expression and WNT5A signaling pathway. Is involved in the negative regulation of chondrogenesis. Recruited by AKAP5 to ORAI1 pore-forming subunit of CRAC channels in Ca(2+) signaling microdomains where store-operated Ca(2+) influx is coupled to calmodulin and calcineurin signaling and activation of NFAT-dependent transcriptional responses. In Mus musculus (Mouse), this protein is Nuclear factor of activated T-cells, cytoplasmic 2 (Nfatc2).